A 173-amino-acid polypeptide reads, in one-letter code: Photosystem I assembly protein Ycf3 (173 aa).

TPR repeat units lie at residues 35-68, 72-105, and 120-153; these read AFAY…EEDP, SFIL…NPKM, and GQRS…APNN.

This sequence belongs to the Ycf3 family.

The protein resides in the cellular thylakoid membrane. Its function is as follows. Essential for the assembly of the photosystem I (PSI) complex. May act as a chaperone-like factor to guide the assembly of the PSI subunits. The protein is Photosystem I assembly protein Ycf3 of Synechococcus elongatus (strain ATCC 33912 / PCC 7942 / FACHB-805) (Anacystis nidulans R2).